A 417-amino-acid chain; its full sequence is D-galactonate dehydratase family member Dd703_0947 (417 aa).

Residue His127 participates in substrate binding. Tyr158 (proton donor/acceptor) is an active-site residue. Asp223 contributes to the Mg(2+) binding site. His225 acts as the Proton donor/acceptor in catalysis. Glu249 and Glu275 together coordinate Mg(2+). 5 residues coordinate substrate: Glu275, Arg296, His325, Asp329, and Glu352.

Belongs to the mandelate racemase/muconate lactonizing enzyme family. GalD subfamily. Requires Mg(2+) as cofactor.

It catalyses the reaction D-mannonate = 2-dehydro-3-deoxy-D-gluconate + H2O. The catalysed reaction is D-gluconate = 2-dehydro-3-deoxy-D-gluconate + H2O. In terms of biological role, has low dehydratase activity with D-mannonate and D-gluconate, suggesting that these are not physiological substrates and that it has no significant role in the in vivo degradation of these compounds. Has no detectable activity with a panel of 70 other acid sugars (in vitro). The polypeptide is D-galactonate dehydratase family member Dd703_0947 (Musicola paradisiaca (strain Ech703) (Dickeya paradisiaca)).